Reading from the N-terminus, the 193-residue chain is Endoribonuclease YbeY (193 aa).

Zn(2+)-binding residues include His-109, His-113, and His-119. Residues 143-193 are disordered; the sequence is GAALREGRREGRAGEAKDRWTRSPTSISTPSRSGSTARGSRAKTSRAGSRT. Over residues 147 to 163 the composition is skewed to basic and acidic residues; sequence REGRREGRAGEAKDRWT. Residues 164-181 show a composition bias toward low complexity; that stretch reads RSPTSISTPSRSGSTARG.

Belongs to the endoribonuclease YbeY family. Zn(2+) serves as cofactor.

The protein resides in the cytoplasm. Functionally, single strand-specific metallo-endoribonuclease involved in late-stage 70S ribosome quality control and in maturation of the 3' terminus of the 16S rRNA. The polypeptide is Endoribonuclease YbeY (Anaeromyxobacter dehalogenans (strain 2CP-C)).